A 530-amino-acid polypeptide reads, in one-letter code: Feruloyl esterase C (530 aa).

Positions 1–25 are cleaved as a signal peptide; it reads MMLTSAILLLTLGVQLSHADDSSRE. Cystine bridges form between Cys-31–Cys-78, Cys-66–Cys-117, Cys-190–Cys-444, Cys-259–Cys-276, Cys-285–Cys-294, and Cys-506–Cys-528. The active-site Acyl-ester intermediate is Ser-191. Ca(2+) is bound by residues Asp-260, Asp-263, Ala-265, Asp-267, and Val-269. Active-site charge relay system residues include Asp-403 and His-443.

This sequence belongs to the tannase family.

It is found in the secreted. It catalyses the reaction feruloyl-polysaccharide + H2O = ferulate + polysaccharide.. Functionally, involved in degradation of plant cell walls. Hydrolyzes the feruloyl-arabinose ester bond in arabinoxylans as well as the feruloyl-galactose and feruloyl-arabinose ester bonds in pectin. Active against methyl esters of sinapate (MSA) and caffeate (MCA). The polypeptide is Feruloyl esterase C (faeC) (Talaromyces stipitatus (strain ATCC 10500 / CBS 375.48 / QM 6759 / NRRL 1006) (Penicillium stipitatum)).